Reading from the N-terminus, the 299-residue chain is MSLANLRRLEAEAIHVLREVVATFSNPVVLYSIGKDSSVLLHLAMKAFFPAKPPFPFLHVDTTWKFREMIAFRDRMARELGFNLLVHTNQDGVDQGIGPFTHGSNLHTHVMKTMALRQALETYGFDAALAGARRDEEKSRAKERMFSIRNAQHGWDPKRQRPEMWKTYNTRVGAGETMRVFPLSNWTEFDIWQYILQENIPIVPLYFAARRPVVRRDGMLIMVDDERMPIEPGEEVMDRMVRFRTLGCYPLTGAIDSEAATVPDILREMLTVRTSERLSRLIDTDEAGAMEKKKREGYF.

This sequence belongs to the PAPS reductase family. CysD subfamily. In terms of assembly, sulfate-activating enzymes, NodP and NodQ, may be physically associated.

The catalysed reaction is sulfate + ATP + H(+) = adenosine 5'-phosphosulfate + diphosphate. Its function is as follows. Proposed to provide activated sulfate for transfer to nod factor. The protein is Sulfate adenylyltransferase subunit 2 (nodP) of Rhizobium sp. (strain BR816).